Reading from the N-terminus, the 671-residue chain is MPDPSTYRPAPGSIPVEPGVYRFRDPHGRVIYVGKAKSLRSRLTSYFADITGLHPRTRQMVTTAGSVEWTVVGTEVEALQLEYNWIKEFDPRFNVRYRDDKSYPVLAVTLNEEYPRLFVYRGPRRKGVRYFGPYSHAWAIRETLDLLTRVFPARTCSNGVFKRHKQIDRPCLLGYIEKCSAPCIGRVSAQEHREIVLDFCDFLSGKTDRLARDMEREMNQAAQELNFERAARLRDNISALQRALERQTVVFGDGTDADVVAFSDDELEAAVQVFHVRGGRVRGQRGWIVEKTGDPGDSDLQGLVEQFLTQFYGDQADLVYAADTEADVAPVPREVLVPVLPRDAEGMTSWLTGLRGSRVSLRVPQRGDKKALAETVERNAKEALAQHKLKRAGDLTTRSAALQELQDALGLEQAPLRIECIDISHVQGTDVVASLVVFEDGLSRRSDYRHYSIREAAGDGRSDDVASIAEVTRRRFARHVQDQQAVTEYAAEGHSRKFAYPPNLFVVDGGAPQVNAAAAELSELGVTDVAVIGLAKRLEEVWVPGEPDPVILPRTSEALYLLQRVRDEAHRFAITFHRSKRSRRMTASVLDGIPGLGEARRAALVSHFGSVAQLKKASVEEITAVPGIGAATAVAVREALIETDSSAPSSGATEAVLPAMVENGVDDTPST.

Residues 16–95 (VEPGVYRFRD…IKEFDPRFNV (80 aa)) form the GIY-YIG domain. The 36-residue stretch at 208–243 (DRLARDMEREMNQAAQELNFERAARLRDNISALQRA) folds into the UVR domain. The segment at 645-671 (SSAPSSGATEAVLPAMVENGVDDTPST) is disordered.

Belongs to the UvrC family. Interacts with UvrB in an incision complex.

The protein resides in the cytoplasm. Its function is as follows. The UvrABC repair system catalyzes the recognition and processing of DNA lesions. UvrC both incises the 5' and 3' sides of the lesion. The N-terminal half is responsible for the 3' incision and the C-terminal half is responsible for the 5' incision. This Mycobacteroides abscessus (strain ATCC 19977 / DSM 44196 / CCUG 20993 / CIP 104536 / JCM 13569 / NCTC 13031 / TMC 1543 / L948) (Mycobacterium abscessus) protein is UvrABC system protein C.